The primary structure comprises 81 residues: Small ribosomal subunit protein uS17 (81 aa).

It belongs to the universal ribosomal protein uS17 family. Part of the 30S ribosomal subunit.

One of the primary rRNA binding proteins, it binds specifically to the 5'-end of 16S ribosomal RNA. In Trichormus variabilis (strain ATCC 29413 / PCC 7937) (Anabaena variabilis), this protein is Small ribosomal subunit protein uS17.